The following is a 226-amino-acid chain: Putative N-acetylmannosamine-6-phosphate 2-epimerase 1 (226 aa).

The protein belongs to the NanE family.

It catalyses the reaction an N-acyl-D-glucosamine 6-phosphate = an N-acyl-D-mannosamine 6-phosphate. The protein operates within amino-sugar metabolism; N-acetylneuraminate degradation; D-fructose 6-phosphate from N-acetylneuraminate: step 3/5. Converts N-acetylmannosamine-6-phosphate (ManNAc-6-P) to N-acetylglucosamine-6-phosphate (GlcNAc-6-P). This is Putative N-acetylmannosamine-6-phosphate 2-epimerase 1 (nanE1) from Salmonella typhimurium (strain LT2 / SGSC1412 / ATCC 700720).